Consider the following 334-residue polypeptide: 5-formaminoimidazole-4-carboxamide-1-(beta)-D-ribofuranosyl 5'-monophosphate synthetase (334 aa).

The 5-amino-1-(5-phospho-beta-D-ribosyl)imidazole-4-carboxamide site is built by Ser10, His11, Ser71, and His75. Residues 78-325 form the ATP-grasp domain; sequence IELVENMKVP…IAMEIREAIE (248 aa). ATP-binding positions include 132–142, 173–176, and Glu204; these read KPHGAKGGKGY and QEYV. 5-amino-1-(5-phospho-beta-D-ribosyl)imidazole-4-carboxamide is bound at residue Asn232. Mg(2+) is bound by residues Glu270 and Glu283.

The protein belongs to the phosphohexose mutase family. In terms of assembly, homotrimer and homohexamer. Mg(2+) serves as cofactor. Requires Mn(2+) as cofactor.

The catalysed reaction is 5-amino-1-(5-phospho-beta-D-ribosyl)imidazole-4-carboxamide + formate + ATP = 5-formamido-1-(5-phospho-D-ribosyl)imidazole-4-carboxamide + ADP + phosphate. Its pathway is purine metabolism; IMP biosynthesis via de novo pathway; 5-formamido-1-(5-phospho-D-ribosyl)imidazole-4-carboxamide from 5-amino-1-(5-phospho-D-ribosyl)imidazole-4-carboxamide (formate route): step 1/1. Its function is as follows. Catalyzes the ATP- and formate-dependent formylation of 5-aminoimidazole-4-carboxamide-1-beta-d-ribofuranosyl 5'-monophosphate (AICAR) to 5-formaminoimidazole-4-carboxamide-1-beta-d-ribofuranosyl 5'-monophosphate (FAICAR) in the absence of folates. This Pyrococcus furiosus (strain ATCC 43587 / DSM 3638 / JCM 8422 / Vc1) protein is 5-formaminoimidazole-4-carboxamide-1-(beta)-D-ribofuranosyl 5'-monophosphate synthetase.